The primary structure comprises 129 residues: GEL complex subunit OPTI (129 aa).

Residues 1–44 are Cytoplasmic-facing; sequence MSGGRRKEEPPQPQLANGALKVSVWSKVLRSDAAWEDKDEFLDV. Residues 45 to 65 traverse the membrane as a helical segment; that stretch reads IYWFRQIIAVVLGVIWGVLPL. Residue arginine 66 is a topological domain, lumenal. Residues 67–84 traverse the membrane as a helical segment; it reads GFLGIAGFCVINAGVLYL. Residues 85–103 lie on the Cytoplasmic side of the membrane; that stretch reads YFSNYLQIDEEEYGGTWEL. A helical transmembrane segment spans residues 104-127; sequence TKEGFMTSFALFMVIWIIFYTAIH. At 128 to 129 the chain is on the lumenal side; it reads YD.

This sequence belongs to the EMC6 family. In terms of assembly, component of the GET- and EMC-like (GEL) complex, composed of RAB5IF/OPTI and TMCO1. The GEL complex is part of the multi-pass translocon (MPT) complex, composed of three subcomplexes, the GEL complex (composed of RAB5IF/OPTI and TMCO1), the BOS complex (composed of NCLN/Nicalin, NOMO1 and TMEM147) and the PAT complex (composed of WDR83OS/Asterix and CCDC47). The MPT complex associates with the SEC61 complex. Interacts with NDUFS3, NDUFA4, NDUFV1, NDUFA9 and NDUFS8 of the mitochondrial membrane respiratory chain NADH dehydrogenase (Complex I). Interacts with UQCRC2 of the ubiquinol-cytochrome c reductase complex (Complex III). Interacts with COX5A and COX7C of the cytochrome c oxidase complex (Complex IV).

The protein localises to the endoplasmic reticulum membrane. It localises to the mitochondrion inner membrane. In terms of biological role, component of the multi-pass translocon (MPT) complex that mediates insertion of multi-pass membrane proteins into the lipid bilayer of membranes. The MPT complex takes over after the SEC61 complex: following membrane insertion of the first few transmembrane segments of proteins by the SEC61 complex, the MPT complex occludes the lateral gate of the SEC61 complex to promote insertion of subsequent transmembrane regions. Within the MPT complex, the GEL subcomplex may mediate insertion of transmembrane regions into the membrane. In addition to its role in multi-pass membrane insertion, RAB5IF/OPTI also acts as an assembly factor for mitochondrial respiratory complexes. This chain is GEL complex subunit OPTI (RAB5IF), found in Canis lupus familiaris (Dog).